Consider the following 234-residue polypeptide: Redox-sensing transcriptional repressor Rex (234 aa).

The H-T-H motif DNA-binding region spans 17–56 (TYIRVLEELEAQNVLRASSGELARRAGVTPFQVRKDLTYF). 91–96 (GMGRLG) contacts NAD(+).

This sequence belongs to the transcriptional regulatory Rex family. As to quaternary structure, homodimer.

It is found in the cytoplasm. In terms of biological role, modulates transcription in response to changes in cellular NADH/NAD(+) redox state. This is Redox-sensing transcriptional repressor Rex from Deinococcus radiodurans (strain ATCC 13939 / DSM 20539 / JCM 16871 / CCUG 27074 / LMG 4051 / NBRC 15346 / NCIMB 9279 / VKM B-1422 / R1).